The sequence spans 304 residues: NADH-cytochrome b5 reductase 2 (304 aa).

A helical membrane pass occupies residues 6–26; that stretch reads GTPVVVAVAAVAATVLLLLLL. The region spanning 43–155 is the FAD-binding FR-type domain; sequence QAKYPLPLVG…RGPNGLLVYK (113 aa). FAD is bound by residues 135 to 165 and 174 to 209; these read DSMKIGDVIDFRGPNGLLVYKGSGTFMIKPD and FAKHLGVIAGGTGITPMLQLIRHITSDPKDSTKCYL.

It belongs to the flavoprotein pyridine nucleotide cytochrome reductase family. Requires FAD as cofactor.

The protein localises to the membrane. It catalyses the reaction 2 Fe(III)-[cytochrome b5] + NADH = 2 Fe(II)-[cytochrome b5] + NAD(+) + H(+). Functionally, NADH-cytochrome b5 reductases are involved in desaturation and elongation of fatty acids, cholesterol biosynthesis and drug metabolism. The protein is NADH-cytochrome b5 reductase 2 (CYB5R2) of Gallus gallus (Chicken).